The sequence spans 163 residues: MSIMPTLDMDKDTFTQVGYLYNLLDKIGHLGLFERDLSCYMLEVLAVDSQNMREINFAHRAKNSTTDVLSFPLDVSEGADSHILAKQMKICLGSVVINYELAQKVAKQRGHSTQDEISLLFIHGFLHILGYDHEVDNGEQRALEQKIIESLGLKESLIVRNTT.

Zn(2+) contacts are provided by histidine 123, histidine 127, and histidine 133.

This sequence belongs to the endoribonuclease YbeY family. It depends on Zn(2+) as a cofactor.

The protein localises to the cytoplasm. Its function is as follows. Single strand-specific metallo-endoribonuclease involved in late-stage 70S ribosome quality control and in maturation of the 3' terminus of the 16S rRNA. In Helicobacter hepaticus (strain ATCC 51449 / 3B1), this protein is Endoribonuclease YbeY.